Consider the following 358-residue polypeptide: UDP-N-acetylglucosamine--N-acetylmuramyl-(pentapeptide) pyrophosphoryl-undecaprenol N-acetylglucosamine transferase (358 aa).

UDP-N-acetyl-alpha-D-glucosamine contacts are provided by residues 11 to 13 (TGG), Asn-120, Arg-161, Ser-188, and Gln-282.

It belongs to the glycosyltransferase 28 family. MurG subfamily.

The protein resides in the cell inner membrane. It carries out the reaction di-trans,octa-cis-undecaprenyl diphospho-N-acetyl-alpha-D-muramoyl-L-alanyl-D-glutamyl-meso-2,6-diaminopimeloyl-D-alanyl-D-alanine + UDP-N-acetyl-alpha-D-glucosamine = di-trans,octa-cis-undecaprenyl diphospho-[N-acetyl-alpha-D-glucosaminyl-(1-&gt;4)]-N-acetyl-alpha-D-muramoyl-L-alanyl-D-glutamyl-meso-2,6-diaminopimeloyl-D-alanyl-D-alanine + UDP + H(+). Its pathway is cell wall biogenesis; peptidoglycan biosynthesis. Functionally, cell wall formation. Catalyzes the transfer of a GlcNAc subunit on undecaprenyl-pyrophosphoryl-MurNAc-pentapeptide (lipid intermediate I) to form undecaprenyl-pyrophosphoryl-MurNAc-(pentapeptide)GlcNAc (lipid intermediate II). The protein is UDP-N-acetylglucosamine--N-acetylmuramyl-(pentapeptide) pyrophosphoryl-undecaprenol N-acetylglucosamine transferase of Parasynechococcus marenigrum (strain WH8102).